The chain runs to 114 residues: Large ribosomal subunit protein uL18 (114 aa).

It belongs to the universal ribosomal protein uL18 family. As to quaternary structure, part of the 50S ribosomal subunit; part of the 5S rRNA/L5/L18/L25 subcomplex. Contacts the 5S and 23S rRNAs.

This is one of the proteins that bind and probably mediate the attachment of the 5S RNA into the large ribosomal subunit, where it forms part of the central protuberance. In Parabacteroides distasonis (strain ATCC 8503 / DSM 20701 / CIP 104284 / JCM 5825 / NCTC 11152), this protein is Large ribosomal subunit protein uL18.